Reading from the N-terminus, the 242-residue chain is MKLSYFYVAADVPDGIIPESSVVIDVLRATTTIAWALENGADSVQVFADVDELKNQAKTFDSKEKILVGERGGKKLDGFDLGNSPLGVSPESVKGKRVFMSTTNGTRSLHRVRESKSLYTMALPNRKAIAERLKSDNPKEVWIVGSGWEGSYSLEDSLAAGALASLLMDQLESVQIVNDELMASVALWKNWENDVEGCLRIASHGQRLAGIGNHDDDFACCASLDNLSVIPKQIEMGVLRSN.

The protein belongs to the ComB family. The cofactor is Mg(2+).

It carries out the reaction (2R)-O-phospho-3-sulfolactate + H2O = (2R)-3-sulfolactate + phosphate. In Prochlorococcus marinus (strain NATL2A), this protein is Probable 2-phosphosulfolactate phosphatase.